The chain runs to 451 residues: Cytosolic Fe-S cluster assembly factor NAR1 (451 aa).

[4Fe-4S] cluster is bound by residues C20, C56, C59, C62, C166, C213, C382, and C386.

Belongs to the NARF family.

In terms of biological role, component of the cytosolic Fe/S protein assembly machinery. Required for maturation of extramitochondrial Fe/S proteins. May play a role in the transfer of pre-assembled Fe/S clusters to target apoproteins. This Eremothecium gossypii (strain ATCC 10895 / CBS 109.51 / FGSC 9923 / NRRL Y-1056) (Yeast) protein is Cytosolic Fe-S cluster assembly factor NAR1 (NAR1).